A 752-amino-acid chain; its full sequence is Protein SEY1 homolog 1 (752 aa).

Residues 1-674 (MIKNQGDRYH…QKHKQDFLQN (674 aa)) are Cytoplasmic-facing. The GB1/RHD3-type G domain maps to 40–265 (GKKYNIVSII…YEKNVRWSDM (226 aa)). 50 to 57 (GSQSTGKS) contacts GTP. Residues 445-465 (NQLKSFVEAQLASFKQQLDNI) adopt a coiled-coil conformation. Residues 675–695 (IPKPFWFLLLFFMYDDVLRWM) traverse the membrane as a helical segment. The Lumenal segment spans residues 696-698 (GNP). Residues 699–719 (LFLYPILIILCFIGFCIAIGL) form a helical membrane-spanning segment. Residues 720–752 (HSLPKLAFQTVFRTINQALLPLIFGGISKLKTS) are Cytoplasmic-facing.

It belongs to the TRAFAC class dynamin-like GTPase superfamily. GB1/RHD3 GTPase family. RHD3 subfamily.

Its subcellular location is the endoplasmic reticulum membrane. Functionally, probable GTP-binding protein that may be involved in cell development. The chain is Protein SEY1 homolog 1 from Paramecium tetraurelia.